Reading from the N-terminus, the 1360-residue chain is TRAF2 and NCK-interacting protein kinase (1360 aa).

The Protein kinase domain maps to 25 to 289 (FELVELVGNG…TEQLMKHPFI (265 aa)). Residues 31 to 39 (VGNGTYGQV) and K54 each bind ATP. The Proton acceptor role is filled by D153. Phosphothreonine is present on T187. Disordered stretches follow at residues 284–347 (MKHP…LPGE), 398–440 (QKEQ…RRRA), and 539–589 (ERSR…RPVD). Residues 288–307 (FIRDQPNERQVRIQLKDHID) are compositionally biased toward basic and acidic residues. The tract at residues 290–1047 (RDQPNERQVR…EIRKYKKRFN (758 aa)) is mediates interaction with NEDD4. Residues 317–335 (DETEYEYSGSEEEEEENDS) show a composition bias toward acidic residues. S324 and S326 each carry phosphoserine. Phosphoserine is present on residues S560 and S570. At T581 the chain carries Phosphothreonine. 4 positions are modified to phosphoserine: S600, S608, S610, and S640. Disordered regions lie at residues 601–801 (QGPA…KAID), 814–878 (LRIE…YNVG), 908–927 (TSGE…AGHI), and 933–998 (VQQS…ESSA). The segment covering 652 to 669 (RIEKFDRSSWLRQEEDIP) has biased composition (basic and acidic residues). Residues S678, S680, S688, S701, S707, S720, S764, S766, and S769 each carry the phosphoserine modification. The span at 720 to 755 (SPLQRTSSGSSSSSSTPSSQPSSQGGSQPGSQAGSS) shows a compositional bias: low complexity. Basic and acidic residues-rich tracts occupy residues 775–789 (EPAK…DITR) and 814–827 (LRIE…KKVT). The span at 834–847 (EESESSEEEEEDGE) shows a compositional bias: acidic residues. Basic and acidic residues predominate over residues 908-917 (TSGEKKRSGH). Position 959 is a phosphoserine (S959). Acidic residues predominate over residues 987-996 (TDEDEEDEES). Residues 1047-1334 (NSEILCAALW…KFLCERNDKV (288 aa)) form the CNH domain.

The protein belongs to the protein kinase superfamily. STE Ser/Thr protein kinase family. STE20 subfamily. As to quaternary structure, interacts (via the CNH domain) with RAP2A (GTP-bound form preferentially); the interaction is direct and required for the activation of TNIK by RAP2A. Interacts with NEDD4; recruits RAP2A to NEDD4. Interacts with TRAF2 and NCK. Interacts with TCF7L2/TCF4 and CTNNB1; the interaction is direct. Interacts with TANC1. Post-translationally, autophosphorylated. Autophosphorylation is activated by RAP2A and induces association to the cytoskeletal fraction. As to expression, expressed ubiquitously. Highest levels observed in heart, brain and skeletal muscle. Expressed in normal colonic epithelia and colorectal cancer tissues.

The protein resides in the nucleus. It localises to the cytoplasm. Its subcellular location is the recycling endosome. It is found in the cytoskeleton. It carries out the reaction L-seryl-[protein] + ATP = O-phospho-L-seryl-[protein] + ADP + H(+). It catalyses the reaction L-threonyl-[protein] + ATP = O-phospho-L-threonyl-[protein] + ADP + H(+). Functionally, serine/threonine kinase that acts as an essential activator of the Wnt signaling pathway. Recruited to promoters of Wnt target genes and required to activate their expression. May act by phosphorylating TCF4/TCF7L2. Appears to act upstream of the JUN N-terminal pathway. May play a role in the response to environmental stress. Part of a signaling complex composed of NEDD4, RAP2A and TNIK which regulates neuronal dendrite extension and arborization during development. More generally, it may play a role in cytoskeletal rearrangements and regulate cell spreading. Phosphorylates SMAD1 on Thr-322. Activator of the Hippo signaling pathway which plays a pivotal role in organ size control and tumor suppression by restricting proliferation and promoting apoptosis. MAP4Ks act in parallel to and are partially redundant with STK3/MST2 and STK4/MST2 in the phosphorylation and activation of LATS1/2, and establish MAP4Ks as components of the expanded Hippo pathway. The polypeptide is TRAF2 and NCK-interacting protein kinase (Homo sapiens (Human)).